Reading from the N-terminus, the 403-residue chain is D-mannonate dehydratase (403 aa).

Asn-38 and His-123 together coordinate substrate. The active-site Proton donor/acceptor is Tyr-160. Position 211 (Asp-211) interacts with Mg(2+). His-213 (proton donor/acceptor) is an active-site residue. Mg(2+)-binding residues include Glu-237 and Glu-263. Substrate contacts are provided by Glu-263, Arg-284, His-313, Asp-317, and Glu-340.

The protein belongs to the mandelate racemase/muconate lactonizing enzyme family. GalD subfamily. Mg(2+) is required as a cofactor.

It catalyses the reaction D-mannonate = 2-dehydro-3-deoxy-D-gluconate + H2O. It participates in carbohydrate metabolism; pentose and glucuronate interconversion. Functionally, catalyzes the dehydration of D-mannonate. Has no detectable activity with a panel of 70 other acid sugars (in vitro). The protein is D-mannonate dehydratase of Sphingomonas sp. (strain SKA58).